The primary structure comprises 458 residues: MDKKQREDSQKHEKFIHYADGSSLEEINNTVAIPKNAGFWKTLMAFMGPGALVAVGYMDPGNWITSIAGGAQFAYTLISVILVSNLIAMLLQAMAARLGIVTGMDLAQMTRAKTGKKMGIFLWIVTELAIMATDIAEIIGSAIALELIFNIPLLWGVLITAFDVLLLLLLMKLGFRKIEAIVATLVAVILFVFLYEVILAQPNMGDVVRGFVPSPRIMTDKKMLFLALGIVGATVMPHNLYLHSSIAQARQYDRDDVAEKRKAIKFTVIDSNIQLTIAFVVNCLLLILGAAMFYGTNSDLGRFVDLFNALQNKEIVGSIASPMLSLLFAVALLASGQNSTITGTLSGQIVMEGFVRMKIPLWARRVITRGLSILPVIIFTVYYHGNEAQVENLLIYSQVFLSIALPVSMIPLTLFTSDEKIMGPFVNRPWVKYTAWFVTIVLTLLNIYLILQTVGLAA.

11 helical membrane passes run 38-58 (GFWK…VGYM), 86-106 (LIAM…GMDL), 119-139 (GIFL…AEII), 151-171 (IPLL…LLLM), 180-200 (AIVA…VILA), 223-243 (MLFL…LYLH), 275-295 (LTIA…MFYG), 315-335 (IVGS…LLAS), 370-390 (GLSI…EAQV), 395-415 (IYSQ…LTLF), and 436-456 (WFVT…TVGL).

It belongs to the NRAMP family.

The protein localises to the cell membrane. Functionally, h(+)-stimulated, divalent metal cation uptake system. In Latilactobacillus sakei subsp. sakei (strain 23K) (Lactobacillus sakei subsp. sakei), this protein is Divalent metal cation transporter MntH.